Consider the following 712-residue polypeptide: Ribosomal RNA large subunit methyltransferase K/L (712 aa).

Residues threonine 43–methionine 154 enclose the THUMP domain.

The protein belongs to the methyltransferase superfamily. RlmKL family.

The protein localises to the cytoplasm. It carries out the reaction guanosine(2445) in 23S rRNA + S-adenosyl-L-methionine = N(2)-methylguanosine(2445) in 23S rRNA + S-adenosyl-L-homocysteine + H(+). It catalyses the reaction guanosine(2069) in 23S rRNA + S-adenosyl-L-methionine = N(2)-methylguanosine(2069) in 23S rRNA + S-adenosyl-L-homocysteine + H(+). In terms of biological role, specifically methylates the guanine in position 2445 (m2G2445) and the guanine in position 2069 (m7G2069) of 23S rRNA. The polypeptide is Ribosomal RNA large subunit methyltransferase K/L (Photobacterium profundum (strain SS9)).